Reading from the N-terminus, the 422-residue chain is NADP-dependent malic enzyme (422 aa).

Residue Tyr-39 is the Proton donor of the active site. Residue Lys-94 is the Proton acceptor of the active site. Lys-94 serves as a coordination point for substrate. Residues Glu-136, Asp-137, and Asp-162 each coordinate a divalent metal cation. NADP(+) is bound by residues 195–198 (AGAA), Asn-286, and Asn-318. Position 318 (Asn-318) interacts with substrate.

Belongs to the malic enzymes family. Mg(2+) serves as cofactor. Requires Mn(2+) as cofactor.

It carries out the reaction (S)-malate + NADP(+) = pyruvate + CO2 + NADPH. The catalysed reaction is oxaloacetate + H(+) = pyruvate + CO2. This chain is NADP-dependent malic enzyme, found in Halomonas elongata (strain ATCC 33173 / DSM 2581 / NBRC 15536 / NCIMB 2198 / 1H9).